Reading from the N-terminus, the 318-residue chain is tRNA(Ile)-lysidine synthase (318 aa).

Serine 26–serine 31 lines the ATP pocket.

The protein belongs to the tRNA(Ile)-lysidine synthase family.

The protein resides in the cytoplasm. The catalysed reaction is cytidine(34) in tRNA(Ile2) + L-lysine + ATP = lysidine(34) in tRNA(Ile2) + AMP + diphosphate + H(+). Functionally, ligates lysine onto the cytidine present at position 34 of the AUA codon-specific tRNA(Ile) that contains the anticodon CAU, in an ATP-dependent manner. Cytidine is converted to lysidine, thus changing the amino acid specificity of the tRNA from methionine to isoleucine. The sequence is that of tRNA(Ile)-lysidine synthase from Nocardia farcinica (strain IFM 10152).